Here is a 205-residue protein sequence, read N- to C-terminus: Glycerol-3-phosphate acyltransferase (205 aa).

Over M1–A3 the chain is Periplasmic. The chain crosses the membrane as a helical span at residues I4–V24. Residues C25 to K52 are Cytoplasmic-facing. A helical membrane pass occupies residues G53–A73. Over Y74 to P80 the chain is Periplasmic. A helical transmembrane segment spans residues F81–G101. At F102–A111 the chain is on the cytoplasmic side. A helical membrane pass occupies residues F112 to L132. Residues T133–S137 are Periplasmic-facing. A helical transmembrane segment spans residues G138–F158. The Cytoplasmic portion of the chain corresponds to K159–K205.

It belongs to the PlsY family. Probably interacts with PlsX.

Its subcellular location is the cell inner membrane. The enzyme catalyses sn-glycerol 3-phosphate + an acyl-CoA = a 1-acyl-sn-glycero-3-phosphate + CoA. The catalysed reaction is a fatty acyl-[ACP] + sn-glycerol 3-phosphate = a 1-acyl-sn-glycero-3-phosphate + holo-[ACP]. Its pathway is lipid metabolism; phospholipid metabolism. In terms of biological role, catalyzes the transfer of an acyl group from acyl-ACP to glycerol-3-phosphate (G3P) to form lysophosphatidic acid (LPA). This enzyme can also utilize acyl-CoA as fatty acyl donor, but not acyl-PO(4). This chain is Glycerol-3-phosphate acyltransferase, found in Salmonella arizonae (strain ATCC BAA-731 / CDC346-86 / RSK2980).